The sequence spans 137 residues: Putative pre-16S rRNA nuclease (137 aa).

It belongs to the YqgF nuclease family.

The protein localises to the cytoplasm. Could be a nuclease involved in processing of the 5'-end of pre-16S rRNA. The protein is Putative pre-16S rRNA nuclease of Clostridium kluyveri (strain NBRC 12016).